The chain runs to 180 residues: Large ribosomal subunit protein uL5 (180 aa).

The protein belongs to the universal ribosomal protein uL5 family. As to quaternary structure, part of the 50S ribosomal subunit; part of the 5S rRNA/L5/L18/L25 subcomplex. Contacts the 5S rRNA and the P site tRNA. Forms a bridge to the 30S subunit in the 70S ribosome.

Functionally, this is one of the proteins that bind and probably mediate the attachment of the 5S RNA into the large ribosomal subunit, where it forms part of the central protuberance. In the 70S ribosome it contacts protein S13 of the 30S subunit (bridge B1b), connecting the 2 subunits; this bridge is implicated in subunit movement. Contacts the P site tRNA; the 5S rRNA and some of its associated proteins might help stabilize positioning of ribosome-bound tRNAs. The protein is Large ribosomal subunit protein uL5 of Ralstonia nicotianae (strain ATCC BAA-1114 / GMI1000) (Ralstonia solanacearum).